A 316-amino-acid chain; its full sequence is Porphobilinogen deaminase (316 aa).

At Cys245 the chain carries S-(dipyrrolylmethanemethyl)cysteine.

It belongs to the HMBS family. As to quaternary structure, monomer. Dipyrromethane is required as a cofactor.

The enzyme catalyses 4 porphobilinogen + H2O = hydroxymethylbilane + 4 NH4(+). Its pathway is porphyrin-containing compound metabolism; protoporphyrin-IX biosynthesis; coproporphyrinogen-III from 5-aminolevulinate: step 2/4. The protein operates within porphyrin-containing compound metabolism; chlorophyll biosynthesis. Tetrapolymerization of the monopyrrole PBG into the hydroxymethylbilane pre-uroporphyrinogen in several discrete steps. This chain is Porphobilinogen deaminase, found in Prochlorococcus marinus subsp. pastoris (strain CCMP1986 / NIES-2087 / MED4).